Reading from the N-terminus, the 600-residue chain is Jacalin-related lectin 18 (600 aa).

Jacalin-type lectin domains lie at 12–158, 161–303, 304–447, and 454–597; these read TQRL…YFTC, PTRM…YFTT, SPFI…YFRL, and GEKV…HVLP.

The protein belongs to the jacalin lectin family.

The polypeptide is Jacalin-related lectin 18 (JAL18) (Arabidopsis thaliana (Mouse-ear cress)).